Here is a 480-residue protein sequence, read N- to C-terminus: Cysteine--tRNA ligase (480 aa).

Cys-29 is a binding site for Zn(2+). Positions 31 to 41 (PTVYSDPHLGH) match the 'HIGH' region motif. Residues Cys-220, His-245, and Glu-249 each contribute to the Zn(2+) site. Positions 276-280 (KMAKS) match the 'KMSKS' region motif. Lys-279 lines the ATP pocket.

The protein belongs to the class-I aminoacyl-tRNA synthetase family. As to quaternary structure, monomer. Requires Zn(2+) as cofactor.

The protein localises to the cytoplasm. The enzyme catalyses tRNA(Cys) + L-cysteine + ATP = L-cysteinyl-tRNA(Cys) + AMP + diphosphate. The chain is Cysteine--tRNA ligase from Thermus thermophilus (strain ATCC BAA-163 / DSM 7039 / HB27).